The chain runs to 610 residues: MGLKAAQKTLFPLRSIDDVVRLFAAELGREEPDLVLLSLVLGFVEHFLAVNRVIPTNVPELTFQPSPAPDPPGGLTYFPVADLSIIAALYARFTAQIRGAVDLSLYPREGGVSSRELVKKVSDVIWNSLSRSYFKDRAHIQSLFSFITGTKLDSSGVAFAVVGACQALGLRDVHLALSEDHAWVVFGPNGEQTAEVTWHGKGNEDRRGQTVNAGVAERSWLYLKGSYMRCDRKMEVAFMVCAINPSIDLHTDSLELLQLQQKLLWLLYDLGHLERYPMALGNLADLEELEPTPGRPDPLTLYHKGIASAKTYYRDEHIYPYMYLAGYHCRNRNVREALQAWADTATVIQDYNYCREDEEIYKEFFEVANDVIPNLLKEAASLLEAGEERPGEQTQGVQSQGSALQDPECFAHLLRFYDGICKWEEGSPTPVLHVGWATFLVQSLGRFEGQVRQKVRIVSREAEAAEAEELWGEEAREGRRRGPRRESKPEEPPPPKKPALDKGPGGGQGAMSGPPRKPPGTVPGTARGPEGGSTAPAPAPAASPPPEGPVLTFQSEKMKGMKELLVATKINSSAIKLQLTAQSQVQMKKQKVSTPSDYTLSFLKRQRKGL.

Positions G214–P390 are interaction with FANCD2. The interval A462–T552 is disordered. A compositionally biased stretch (basic and acidic residues) spans R484–L500. S487 and S543 each carry phosphoserine. Residues A537 to G548 are compositionally biased toward pro residues. T594 bears the Phosphothreonine mark.

Component of the MLL-HCF complex, at least composed of KMT2A/MLL1, MEN1, ASH2L, RBBP5, DPY30, WDR5, HCFC1 and HCFC2. Component of the menin-associated histone methyltransferase complex, at least composed of KMT2B/MLL4, MEN1, ASH2L, RBBP5, DPY30 and WDR5. Interacts with POLR2B. Interacts with POLR2A phosphorylated at 'Ser-5', but not with the unphosphorylated, nor 'Ser-2' phosphorylated POLR2A forms. Interacts with FANCD2 and DBF4. Interacts with SMAD3, but not with SMAD2, nor SMAD4. Directly interacts with NFKB1, NFKB2 and RELA. Interacts with JUND (via MBM motif); inhibits the interaction of JUND with MAPK10 and the phosphorylation of JUND by MAP kinases MAPK8 and MAPK10. Interacts with KMT2A (via MBM motif). The KMT2A-MEN1 complex interacts with PSIP1 with a greater affinity as MEN1 enhances interaction of KMT2A with PSIP1.

The protein localises to the nucleus. In terms of biological role, essential component of a MLL/SET1 histone methyltransferase (HMT) complex, a complex that specifically methylates 'Lys-4' of histone H3 (H3K4). Functions as a transcriptional regulator. Binds to the TERT promoter and represses telomerase expression. Plays a role in TGFB1-mediated inhibition of cell-proliferation, possibly regulating SMAD3 transcriptional activity. Represses JUND-mediated transcriptional activation on AP1 sites, as well as that mediated by NFKB subunit RELA. Positively regulates HOXC8 and HOXC6 gene expression. May be involved in normal hematopoiesis through the activation of HOXA9 expression. May be involved in DNA repair. The protein is Menin (MEN1) of Canis lupus familiaris (Dog).